The sequence spans 194 residues: Peptidyl-tRNA hydrolase (194 aa).

Residue Y17 participates in tRNA binding. The active-site Proton acceptor is the H22. TRNA contacts are provided by F68, N70, and N116.

The protein belongs to the PTH family. As to quaternary structure, monomer.

The protein localises to the cytoplasm. The enzyme catalyses an N-acyl-L-alpha-aminoacyl-tRNA + H2O = an N-acyl-L-amino acid + a tRNA + H(+). Functionally, hydrolyzes ribosome-free peptidyl-tRNAs (with 1 or more amino acids incorporated), which drop off the ribosome during protein synthesis, or as a result of ribosome stalling. Its function is as follows. Catalyzes the release of premature peptidyl moieties from peptidyl-tRNA molecules trapped in stalled 50S ribosomal subunits, and thus maintains levels of free tRNAs and 50S ribosomes. The protein is Peptidyl-tRNA hydrolase of Proteus mirabilis (strain HI4320).